The primary structure comprises 492 residues: Adenosylhomocysteinase (492 aa).

Substrate contacts are provided by threonine 68, aspartate 153, and glutamate 215. 216 to 218 (TTT) is a binding site for NAD(+). Substrate contacts are provided by lysine 245 and aspartate 249. NAD(+) is bound by residues asparagine 250, 279–284 (GYGDVG), glutamate 302, asparagine 337, 358–360 (IGH), and asparagine 406.

Belongs to the adenosylhomocysteinase family. The cofactor is NAD(+).

It localises to the cytoplasm. It catalyses the reaction S-adenosyl-L-homocysteine + H2O = L-homocysteine + adenosine. The protein operates within amino-acid biosynthesis; L-homocysteine biosynthesis; L-homocysteine from S-adenosyl-L-homocysteine: step 1/1. In terms of biological role, may play a key role in the regulation of the intracellular concentration of adenosylhomocysteine. This chain is Adenosylhomocysteinase, found in Mycobacterium ulcerans (strain Agy99).